The following is a 95-amino-acid chain: Co-chaperonin GroES (95 aa).

It belongs to the GroES chaperonin family. In terms of assembly, heptamer of 7 subunits arranged in a ring. Interacts with the chaperonin GroEL.

Its subcellular location is the cytoplasm. Functionally, together with the chaperonin GroEL, plays an essential role in assisting protein folding. The GroEL-GroES system forms a nano-cage that allows encapsulation of the non-native substrate proteins and provides a physical environment optimized to promote and accelerate protein folding. GroES binds to the apical surface of the GroEL ring, thereby capping the opening of the GroEL channel. This Aliivibrio salmonicida (strain LFI1238) (Vibrio salmonicida (strain LFI1238)) protein is Co-chaperonin GroES.